Consider the following 46-residue polypeptide: Alpha-1-antiproteinase (46 aa).

Ser30 bears the Phosphoserine mark.

It belongs to the serpin family. Post-translationally, N-glycosylated; contains bi- and triantennary glycans with a bisecting N-acetylglucosamine and fucose residue. Plasma.

It is found in the secreted. This Notamacropus eugenii (Tammar wallaby) protein is Alpha-1-antiproteinase.